Reading from the N-terminus, the 118-residue chain is Succinate dehydrogenase assembly factor 4, mitochondrial (118 aa).

The N-terminal 30 residues, 1–30 (MQSVTRQTARVLPQMGKQVSYLSTSGAWRA), are a transit peptide targeting the mitochondrion. The interval 65–118 (GKLDEFSRHPYQEKEPLKPWPNQTNPYTGEIGGPAGPEPTRYGDWERKGRVSDF) is disordered. Basic and acidic residues-rich tracts occupy residues 66–81 (KLDE…KEPL) and 105–118 (RYGD…VSDF).

The protein belongs to the SDHAF4 family. Interacts with SdhA in its FAD-bound form.

The protein localises to the mitochondrion matrix. Its function is as follows. Plays an essential role in the assembly of succinate dehydrogenase (SDH), an enzyme complex (also referred to as respiratory complex II) that is a component of both the tricarboxylic acid (TCA) cycle and the mitochondrial electron transport chain, and which couples the oxidation of succinate to fumarate with the reduction of ubiquinone (coenzyme Q) to ubiquinol. Binds to the flavoprotein subunit SdhA in its FAD-bound form, blocking the generation of excess reactive oxygen species (ROS) and facilitating its assembly with the iron-sulfur protein subunit SdhB into the SDH catalytic dimer. The polypeptide is Succinate dehydrogenase assembly factor 4, mitochondrial (Drosophila melanogaster (Fruit fly)).